The primary structure comprises 222 residues: Ribonuclease 3 (222 aa).

The 123-residue stretch at 5-127 (PIKLEKKLKL…LIGAIYLDKG (123 aa)) folds into the RNase III domain. Glutamate 41 provides a ligand contact to Mg(2+). The active site involves aspartate 45. Residues aspartate 113 and glutamate 116 each contribute to the Mg(2+) site. The active site involves glutamate 116. Residues 152–221 (DAKTKLQEYS…ASLCLQDIFK (70 aa)) form the DRBM domain.

Belongs to the ribonuclease III family. In terms of assembly, homodimer. The cofactor is Mg(2+).

It is found in the cytoplasm. It carries out the reaction Endonucleolytic cleavage to 5'-phosphomonoester.. Functionally, digests double-stranded RNA. Involved in the processing of primary rRNA transcript to yield the immediate precursors to the large and small rRNAs (23S and 16S). Processes some mRNAs, and tRNAs when they are encoded in the rRNA operon. Processes pre-crRNA and tracrRNA of type II CRISPR loci if present in the organism. This is Ribonuclease 3 from Pelagibacter ubique (strain HTCC1062).